The chain runs to 95 residues: Aspartyl/glutamyl-tRNA(Asn/Gln) amidotransferase subunit C (95 aa).

The protein belongs to the GatC family. Heterotrimer of A, B and C subunits.

It carries out the reaction L-glutamyl-tRNA(Gln) + L-glutamine + ATP + H2O = L-glutaminyl-tRNA(Gln) + L-glutamate + ADP + phosphate + H(+). The catalysed reaction is L-aspartyl-tRNA(Asn) + L-glutamine + ATP + H2O = L-asparaginyl-tRNA(Asn) + L-glutamate + ADP + phosphate + 2 H(+). In terms of biological role, allows the formation of correctly charged Asn-tRNA(Asn) or Gln-tRNA(Gln) through the transamidation of misacylated Asp-tRNA(Asn) or Glu-tRNA(Gln) in organisms which lack either or both of asparaginyl-tRNA or glutaminyl-tRNA synthetases. The reaction takes place in the presence of glutamine and ATP through an activated phospho-Asp-tRNA(Asn) or phospho-Glu-tRNA(Gln). The polypeptide is Aspartyl/glutamyl-tRNA(Asn/Gln) amidotransferase subunit C (Nitrosomonas europaea (strain ATCC 19718 / CIP 103999 / KCTC 2705 / NBRC 14298)).